The sequence spans 499 residues: Alpha-amylase 3 (499 aa).

Ca(2+) contacts are provided by asparagine 127 and aspartate 183. The active-site Nucleophile is aspartate 213. Residue histidine 217 participates in Ca(2+) binding. Glutamate 248 (proton donor) is an active-site residue.

It belongs to the glycosyl hydrolase 13 family. As to quaternary structure, monomer. Ca(2+) is required as a cofactor.

It localises to the cytoplasm. The catalysed reaction is Endohydrolysis of (1-&gt;4)-alpha-D-glucosidic linkages in polysaccharides containing three or more (1-&gt;4)-alpha-linked D-glucose units.. This Dictyoglomus thermophilum (strain ATCC 35947 / DSM 3960 / H-6-12) protein is Alpha-amylase 3 (amyC).